The primary structure comprises 539 residues: Chaperonin GroEL (539 aa).

ATP contacts are provided by residues 30–33 (TLGP), 87–91 (DGTTT), Gly414, 479–481 (DAL), and Asp495.

The protein belongs to the chaperonin (HSP60) family. As to quaternary structure, forms a cylinder of 14 subunits composed of two heptameric rings stacked back-to-back. Interacts with the co-chaperonin GroES.

The protein localises to the cytoplasm. It catalyses the reaction ATP + H2O + a folded polypeptide = ADP + phosphate + an unfolded polypeptide.. Functionally, together with its co-chaperonin GroES, plays an essential role in assisting protein folding. The GroEL-GroES system forms a nano-cage that allows encapsulation of the non-native substrate proteins and provides a physical environment optimized to promote and accelerate protein folding. This chain is Chaperonin GroEL, found in Caldicellulosiruptor saccharolyticus (strain ATCC 43494 / DSM 8903 / Tp8T 6331).